The following is a 553-amino-acid chain: Cytochrome P450 monooxygenase alnD (553 aa).

A helical transmembrane segment spans residues leucine 351 to valine 371. Cysteine 493 provides a ligand contact to heme. Asparagine 518 is a glycosylation site (N-linked (GlcNAc...) asparagine).

Belongs to the cytochrome P450 family. Heme serves as cofactor.

The protein localises to the membrane. It functions in the pathway polyketide biosynthesis. Functionally, cytochrome P450 monooxygenase; part of the gene cluster that mediates the biosynthesis of asperlin, a polyketide showing anti-inflammatory, antitumor and antibiotic activities. The first step of the asperlin biosynthesis is the production of the intermediate 2,4,6-octatrienoic acid by the highly redusing polyketide synthase alnA with cleavage of the PKS product by the esterase alnB. 2,4,6-octatrienoic acid is further converted to asperlin via several steps involving the remaining enzymes from the cluster. In Emericella nidulans (strain FGSC A4 / ATCC 38163 / CBS 112.46 / NRRL 194 / M139) (Aspergillus nidulans), this protein is Cytochrome P450 monooxygenase alnD.